The following is a 766-amino-acid chain: Serine/threonine-protein kinase tousled-like 1 (766 aa).

The tract at residues M1 to D198 is disordered. Residues S20 to S33 show a composition bias toward low complexity. Residue T38 is modified to Phosphothreonine. Residues R43–E64 show a composition bias toward basic and acidic residues. 3 positions are modified to phosphoserine: S54, S77, and S80. Residues T68–A85 are compositionally biased toward low complexity. The segment covering A87–S103 has biased composition (polar residues). Over residues S105–R121 the composition is skewed to basic and acidic residues. 4 positions are modified to phosphoserine: S134, S159, S174, and S176. A compositionally biased stretch (low complexity) spans S170 to T192. The stretch at N229–E280 forms a coiled coil. Residues K344 to P381 form a disordered region. The segment covering T353–E365 has biased composition (polar residues). Positions H397–Q445 form a coiled coil. In terms of domain architecture, Protein kinase spans Y456–L734. ATP-binding positions include L462 to V470 and K485. The active-site Proton acceptor is the D586. S743 is modified (phosphoserine). The tract at residues G745 to Y766 is disordered.

The protein belongs to the protein kinase superfamily. Ser/Thr protein kinase family. Heterodimer with TLK2. The cofactor is Mg(2+). Ubiquitously expressed in all tissues examined.

It localises to the nucleus. The enzyme catalyses L-seryl-[protein] + ATP = O-phospho-L-seryl-[protein] + ADP + H(+). The catalysed reaction is L-threonyl-[protein] + ATP = O-phospho-L-threonyl-[protein] + ADP + H(+). Cell-cycle regulated, maximal activity in S-phase. Inactivated by phosphorylation at Ser-743, potentially by CHEK1. Rapidly and transiently inhibited by phosphorylation following the generation of DNA double-stranded breaks during S-phase. This is cell cycle checkpoint and ATM-pathway dependent and appears to regulate processes involved in chromatin assembly. Isoform 3 protects the cells from the ionizing radiation by facilitating the repair of DSBs. In vitro, phosphorylates histone H3 at 'Ser-10'. In Mus musculus (Mouse), this protein is Serine/threonine-protein kinase tousled-like 1 (Tlk1).